A 66-amino-acid chain; its full sequence is Large ribosomal subunit protein bL31 (66 aa).

4 residues coordinate Zn(2+): cysteine 16, cysteine 18, cysteine 36, and cysteine 39.

The protein belongs to the bacterial ribosomal protein bL31 family. Type A subfamily. Part of the 50S ribosomal subunit. Zn(2+) serves as cofactor.

Binds the 23S rRNA. This chain is Large ribosomal subunit protein bL31, found in Natranaerobius thermophilus (strain ATCC BAA-1301 / DSM 18059 / JW/NM-WN-LF).